Here is a 489-residue protein sequence, read N- to C-terminus: 3-octaprenyl-4-hydroxybenzoate carboxy-lyase (489 aa).

Position 172 (Asn-172) interacts with Mn(2+). Prenylated FMN is bound by residues 175–177 (IYR), 189–191 (RWL), and 194–195 (RG). Position 238 (Glu-238) interacts with Mn(2+). Asp-287 serves as the catalytic Proton donor.

Belongs to the UbiD family. As to quaternary structure, homohexamer. Prenylated FMN serves as cofactor. The cofactor is Mn(2+).

The protein resides in the cell membrane. It carries out the reaction a 4-hydroxy-3-(all-trans-polyprenyl)benzoate + H(+) = a 2-(all-trans-polyprenyl)phenol + CO2. The protein operates within cofactor biosynthesis; ubiquinone biosynthesis. Catalyzes the decarboxylation of 3-octaprenyl-4-hydroxy benzoate to 2-octaprenylphenol, an intermediate step in ubiquinone biosynthesis. This is 3-octaprenyl-4-hydroxybenzoate carboxy-lyase from Glaesserella parasuis serovar 5 (strain SH0165) (Haemophilus parasuis).